The primary structure comprises 219 residues: Pyridoxal 5'-phosphate synthase subunit PDX2 (219 aa).

Position 52–54 (52–54 (GES)) interacts with L-glutamine. The active-site Nucleophile is the C87. Residues R121 and 153–154 (IR) each bind L-glutamine. Catalysis depends on charge relay system residues H196 and E198.

It belongs to the glutaminase PdxT/SNO family. In the presence of Pdx1, forms a dodecamer of heterodimers. Only shows activity in the heterodimer.

Its subcellular location is the cytoplasm. It carries out the reaction aldehydo-D-ribose 5-phosphate + D-glyceraldehyde 3-phosphate + L-glutamine = pyridoxal 5'-phosphate + L-glutamate + phosphate + 3 H2O + H(+). The enzyme catalyses L-glutamine + H2O = L-glutamate + NH4(+). It functions in the pathway cofactor biosynthesis; pyridoxal 5'-phosphate biosynthesis. Functionally, catalyzes the hydrolysis of glutamine to glutamate and ammonia as part of the biosynthesis of pyridoxal 5'-phosphate. The resulting ammonia molecule is channeled to the active site of Pdx1. This chain is Pyridoxal 5'-phosphate synthase subunit PDX2, found in Plasmodium falciparum (isolate 3D7).